A 178-amino-acid polypeptide reads, in one-letter code: CDP-archaeol synthase (178 aa).

The next 5 helical transmembrane spans lie at 3 to 23 (IIYLVINSFIFILPAYVANAT), 55 to 75 (TFFGLFCGTITAILEGIIFNL), 91 to 111 (GIVGLLLSAGALFGDAIGSFI), 125 to 145 (ILDQLGFIVFALLFVYPFAPV), and 149 to 169 (MGIFLLVITPMIHLSANIIAY).

The protein belongs to the CDP-archaeol synthase family. Mg(2+) is required as a cofactor.

Its subcellular location is the cell membrane. It carries out the reaction 2,3-bis-O-(geranylgeranyl)-sn-glycerol 1-phosphate + CTP + H(+) = CDP-2,3-bis-O-(geranylgeranyl)-sn-glycerol + diphosphate. It participates in membrane lipid metabolism; glycerophospholipid metabolism. Its function is as follows. Catalyzes the formation of CDP-2,3-bis-(O-geranylgeranyl)-sn-glycerol (CDP-archaeol) from 2,3-bis-(O-geranylgeranyl)-sn-glycerol 1-phosphate (DGGGP) and CTP. This reaction is the third ether-bond-formation step in the biosynthesis of archaeal membrane lipids. In Methanococcus aeolicus (strain ATCC BAA-1280 / DSM 17508 / OCM 812 / Nankai-3), this protein is CDP-archaeol synthase.